An 89-amino-acid chain; its full sequence is Co-chaperonin GroES (89 aa).

It belongs to the GroES chaperonin family. In terms of assembly, heptamer of 7 subunits arranged in a ring. Interacts with the chaperonin GroEL.

The protein localises to the cytoplasm. Its function is as follows. Together with the chaperonin GroEL, plays an essential role in assisting protein folding. The GroEL-GroES system forms a nano-cage that allows encapsulation of the non-native substrate proteins and provides a physical environment optimized to promote and accelerate protein folding. GroES binds to the apical surface of the GroEL ring, thereby capping the opening of the GroEL channel. The chain is Co-chaperonin GroES from Pseudothermotoga lettingae (strain ATCC BAA-301 / DSM 14385 / NBRC 107922 / TMO) (Thermotoga lettingae).